We begin with the raw amino-acid sequence, 302 residues long: Deoxyribonuclease-1-like 1 (302 aa).

The signal sequence occupies residues 1–18 (MHYPTALLFLILVNGAQA). Residues Glu-97 and His-148 contribute to the active site. Cys-187 and Cys-224 are disulfide-bonded. Asn-261 is a glycosylation site (N-linked (GlcNAc...) asparagine).

This sequence belongs to the DNase I family.

The protein localises to the endoplasmic reticulum. This is Deoxyribonuclease-1-like 1 (DNASE1L1) from Chlorocebus aethiops (Green monkey).